Consider the following 440-residue polypeptide: Sorting nexin-31 (440 aa).

Residues 1–109 enclose the PX domain; the sequence is MKMHFCIPVS…EFLKLAQLNT (109 aa).

The protein belongs to the sorting nexin family. In terms of assembly, interacts with CCDC22, CCDC93, VPS26C and VPS35L, associates with the retriever and CCC complexes.

Functionally, may be involved in protein trafficking. The polypeptide is Sorting nexin-31 (SNX31) (Homo sapiens (Human)).